The primary structure comprises 216 residues: Ribosomal RNA small subunit methyltransferase G (216 aa).

Residues glycine 75, leucine 80, and arginine 141 each coordinate S-adenosyl-L-methionine.

This sequence belongs to the methyltransferase superfamily. RNA methyltransferase RsmG family.

It localises to the cytoplasm. The catalysed reaction is guanosine(527) in 16S rRNA + S-adenosyl-L-methionine = N(7)-methylguanosine(527) in 16S rRNA + S-adenosyl-L-homocysteine. Its function is as follows. Specifically methylates the N7 position of guanine in position 527 of 16S rRNA. This chain is Ribosomal RNA small subunit methyltransferase G, found in Nitrosospira multiformis (strain ATCC 25196 / NCIMB 11849 / C 71).